We begin with the raw amino-acid sequence, 468 residues long: Ribulose bisphosphate carboxylase large chain (468 aa).

Residue Lys-7 is modified to N6,N6,N6-trimethyllysine. Substrate-binding residues include Asn-116 and Thr-166. The active-site Proton acceptor is Lys-168. Substrate is bound at residue Lys-170. Positions 194, 196, and 197 each coordinate Mg(2+). Residue Lys-194 is modified to N6-carboxylysine. Catalysis depends on His-287, which acts as the Proton acceptor. Residues Arg-288, His-320, and Ser-372 each contribute to the substrate site.

This sequence belongs to the RuBisCO large chain family. Type I subfamily. As to quaternary structure, heterohexadecamer of 8 large chains and 8 small chains; disulfide-linked. The disulfide link is formed within the large subunit homodimers. Mg(2+) is required as a cofactor. Post-translationally, the disulfide bond which can form in the large chain dimeric partners within the hexadecamer appears to be associated with oxidative stress and protein turnover.

It is found in the plastid. The protein localises to the chloroplast. The catalysed reaction is 2 (2R)-3-phosphoglycerate + 2 H(+) = D-ribulose 1,5-bisphosphate + CO2 + H2O. The enzyme catalyses D-ribulose 1,5-bisphosphate + O2 = 2-phosphoglycolate + (2R)-3-phosphoglycerate + 2 H(+). Functionally, ruBisCO catalyzes two reactions: the carboxylation of D-ribulose 1,5-bisphosphate, the primary event in carbon dioxide fixation, as well as the oxidative fragmentation of the pentose substrate in the photorespiration process. Both reactions occur simultaneously and in competition at the same active site. In Cornus alternifolia (Pagoda dogwood), this protein is Ribulose bisphosphate carboxylase large chain.